We begin with the raw amino-acid sequence, 160 residues long: Cytochrome b6-f complex subunit 4 (160 aa).

Helical transmembrane passes span 36-56 (LLYI…GLAV), 95-115 (LLGV…PFLE), and 131-151 (TVFL…ALPI).

The protein belongs to the cytochrome b family. PetD subfamily. The 4 large subunits of the cytochrome b6-f complex are cytochrome b6, subunit IV (17 kDa polypeptide, petD), cytochrome f and the Rieske protein, while the 4 small subunits are petG, petL, petM and petN. The complex functions as a dimer.

Its subcellular location is the plastid. The protein resides in the chloroplast thylakoid membrane. Its function is as follows. Component of the cytochrome b6-f complex, which mediates electron transfer between photosystem II (PSII) and photosystem I (PSI), cyclic electron flow around PSI, and state transitions. This is Cytochrome b6-f complex subunit 4 from Spirogyra maxima (Green alga).